The chain runs to 422 residues: MSSRYRVEYNLKVHKKDAFIEWIKGLLAVPFVLQAGTDSGAERTYKQYCSIFSDIENLVSQKIEIQNRRRQLGSLEEARLDQLVPQVGTFFTHLPLVEAFEVQNRRRAICSRKMVSPSFNDIRHILNSAQILALLKSKELKLVTFDGDVTLYEDGGSIERGGKIVTRIITLLKRGINVGVVTAAGYDDPDKYKERLYGLCFALFSDKSMSLEQKSKLTVMGGESNYLFQYFETSEQFGFKSIDDDEWVPSSVKAWSDDDIDATLDVAQTCFGELSHLLALPSKCQIIRKKRAVGFVPGFIFDDELEVNVKIKIPREALEEMVLVVQKKLESYPPAQNIQFSCFDGGSDVWCDIGGKDLGVSILQNFYQTDSPITAAQTLHIGDQFAPKGSANDFKARSAGCTLWISSPRETIEVLDDLLPYL.

ATP is bound by residues Arg106 and His124. Residue Asp146 is the Nucleophile of the active site. IMP-binding residues include Asp146, Asp148, Asp154, Thr182, Asp348, and Lys356. The Mg(2+) site is built by Asp146 and Asp148. The Proton donor role is filled by Asp148. Asp383 serves as a coordination point for Mg(2+).

This sequence belongs to the ISN1 family. In terms of assembly, homotetramer. Mg(2+) serves as cofactor.

The catalysed reaction is IMP + H2O = inosine + phosphate. Allosterically activated by ATP. ATP binding is a prerequisite to magnesium and substrate binding. ATP binds to 2 of the subunits in the homotetramer inducing a closure of these 2 subunits and the release of the C-terminal loop, thereby activating the enzyme. IMP-specific 5'-nucleotidase involved in IMP (inositol monophosphate) degradation. This Kluyveromyces lactis (strain ATCC 8585 / CBS 2359 / DSM 70799 / NBRC 1267 / NRRL Y-1140 / WM37) (Yeast) protein is IMP-specific 5'-nucleotidase 1 (ISN1).